The following is a 310-amino-acid chain: Mitochondrial citrate transporter E (310 aa).

3 Solcar repeats span residues 2-95 (STTT…LRQG), 107-199 (QSLG…AKRR), and 208-293 (DGPG…TNKI). Transmembrane regions (helical) follow at residues 8–28 (FIAG…FETV), 72–92 (GSAY…YEPL), 114–133 (LAGA…FFLV), 178–198 (AMVR…FAKR), 211–228 (GLHL…CCVM), and 265–286 (IYKG…TLSL).

Belongs to the mitochondrial carrier (TC 2.A.29) family.

It is found in the mitochondrion inner membrane. Its function is as follows. Mitochondrial transporter that does not mediate citrate export from mitochondria to cytoplasm. Its exact function has still to be determined. The polypeptide is Mitochondrial citrate transporter E (Aspergillus niger (strain ATCC 1015 / CBS 113.46 / FGSC A1144 / LSHB Ac4 / NCTC 3858a / NRRL 328 / USDA 3528.7)).